The primary structure comprises 340 residues: Glycerol-3-phosphate dehydrogenase [NAD(P)+] (340 aa).

Residues Trp11, Arg33, and Lys110 each contribute to the NADPH site. Residues Lys110, Gly144, and Ser146 each coordinate sn-glycerol 3-phosphate. Ala148 contributes to the NADPH binding site. The sn-glycerol 3-phosphate site is built by Lys199, Asp252, Ser262, Arg263, and Asn264. The active-site Proton acceptor is Lys199. Arg263 is a binding site for NADPH. Val287 and Glu289 together coordinate NADPH.

It belongs to the NAD-dependent glycerol-3-phosphate dehydrogenase family.

The protein localises to the cytoplasm. The enzyme catalyses sn-glycerol 3-phosphate + NAD(+) = dihydroxyacetone phosphate + NADH + H(+). It carries out the reaction sn-glycerol 3-phosphate + NADP(+) = dihydroxyacetone phosphate + NADPH + H(+). It participates in membrane lipid metabolism; glycerophospholipid metabolism. In terms of biological role, catalyzes the reduction of the glycolytic intermediate dihydroxyacetone phosphate (DHAP) to sn-glycerol 3-phosphate (G3P), the key precursor for phospholipid synthesis. The polypeptide is Glycerol-3-phosphate dehydrogenase [NAD(P)+] (Polynucleobacter asymbioticus (strain DSM 18221 / CIP 109841 / QLW-P1DMWA-1) (Polynucleobacter necessarius subsp. asymbioticus)).